Here is a 2221-residue protein sequence, read N- to C-terminus: Voltage-dependent L-type calcium channel subunit alpha-1C (2221 aa).

The segment at methionine 1 to tyrosine 20 is disordered. Topologically, residues methionine 1–lysine 124 are cytoplasmic. Residues glycine 47–alanine 68 form a calmodulin-binding region. The interval isoleucine 73–threonine 98 is disordered. Positions glutamine 80 to lysine 91 are enriched in basic residues. Residues asparagine 111–phenylalanine 408 form an I repeat. A helical transmembrane segment spans residues proline 125–isoleucine 143. Topologically, residues tyrosine 144–asparagine 158 are extracellular. N-linked (GlcNAc...) asparagine glycosylation occurs at asparagine 153. Residues leucine 159–isoleucine 179 traverse the membrane as a helical segment. The Cytoplasmic segment spans residues alanine 180–asparagine 188. A helical membrane pass occupies residues alanine 189–serine 209. At alanine 210–aspartate 232 the chain is on the extracellular side. Residues valine 233 to valine 251 form a helical membrane-spanning segment. Residues proline 252–leucine 268 are Cytoplasmic-facing. A helical transmembrane segment spans residues leucine 269–phenylalanine 290. Over methionine 291–alanine 350 the chain is Extracellular. 2 cysteine pairs are disulfide-bonded: cysteine 298/cysteine 326 and cysteine 316/cysteine 332. The N-linked (GlcNAc...) asparagine glycan is linked to asparagine 328. The segment at residues phenylalanine 351–valine 372 is an intramembrane region (pore-forming). The Selectivity filter of repeat I signature appears at threonine 361 to glycine 364. Glutamate 363 contacts Ca(2+). At asparagine 373–tryptophan 380 the chain is on the extracellular side. Residues proline 381–leucine 401 traverse the membrane as a helical segment. Residues glycine 402–asparagine 524 are Cytoplasmic-facing. Residues glutamine 428–glutamate 445 are AID/alpha-interaction domain; mediates interaction with the beta subunit. The interval proline 449–glycine 481 is disordered. The segment covering serine 465 to asparagine 478 has biased composition (polar residues). Position 469 is a phosphoserine (serine 469). Position 476 is a phosphothreonine (threonine 476). One copy of the II repeat lies at asparagine 510 to leucine 756. The helical transmembrane segment at valine 525 to serine 543 threads the bilayer. At glutamate 544 to glutamate 554 the chain is on the extracellular side. The chain crosses the membrane as a helical span at residues valine 555–methionine 575. Residues tyrosine 576–serine 586 lie on the Cytoplasmic side of the membrane. A helical membrane pass occupies residues leucine 587–valine 606. At glutamate 607–glycine 615 the chain is on the extracellular side. The chain crosses the membrane as a helical span at residues isoleucine 616–tryptophan 634. Over asparagine 635–serine 653 the chain is Cytoplasmic. A helical membrane pass occupies residues leucine 654–phenylalanine 673. The Extracellular portion of the chain corresponds to glycine 674–proline 693. The pore-forming intramembrane region spans glutamine 694–glycine 715. The short motif at threonine 704–aspartate 707 is the Selectivity filter of repeat II element. Glutamate 706 serves as a coordination point for Ca(2+). Residues isoleucine 716–proline 725 lie on the Extracellular side of the membrane. Residues glycine 726 to leucine 745 form a helical membrane-spanning segment. At asparagine 746 to threonine 900 the chain is on the cytoplasmic side. A disordered region spans residues serine 764–proline 861. Over residues serine 783–glutamate 792 the composition is skewed to basic and acidic residues. Residues serine 808 and serine 815 each carry the phosphoserine modification. The tract at residues asparagine 829–glutamate 876 is interaction with STAC2. Residues threonine 843–glutamate 852 show a composition bias toward acidic residues. One copy of the III repeat lies at asparagine 887–phenylalanine 1189. Residues isoleucine 901–alanine 919 traverse the membrane as a helical segment. Topologically, residues glutamate 920 to histidine 931 are extracellular. A helical membrane pass occupies residues isoleucine 932–isoleucine 952. Over leucine 953–asparagine 987 the chain is Cytoplasmic. A helical transmembrane segment spans residues tyrosine 988–isoleucine 1006. The Extracellular portion of the chain corresponds to glutamine 1007–valine 1013. The helical transmembrane segment at valine 1014–alanine 1032 threads the bilayer. Topologically, residues lysine 1033–asparagine 1051 are cytoplasmic. Residues isoleucine 1052–phenylalanine 1071 form a helical membrane-spanning segment. The Extracellular portion of the chain corresponds to lysine 1072 to valine 1121. Cysteine 1078 and cysteine 1089 are oxidised to a cystine. The dihydropyridine binding stretch occupies residues arginine 1109–lysine 1198. Positions leucine 1122 to tyrosine 1142 form an intramembrane region, pore-forming. Residues threonine 1133–glycine 1136 carry the Selectivity filter of repeat III motif. Glutamate 1135 serves as a coordination point for Ca(2+). At arginine 1143–arginine 1159 the chain is on the extracellular side. Residues valine 1160–phenylalanine 1181 form a helical membrane-spanning segment. Over valine 1182–threonine 1239 the chain is Cytoplasmic. The stretch at asparagine 1226–phenylalanine 1527 is one IV repeat. The helical transmembrane segment at tyrosine 1240–tyrosine 1261 threads the bilayer. Residues glycine 1262 to isoleucine 1269 are Extracellular-facing. The chain crosses the membrane as a helical span at residues alanine 1270–isoleucine 1291. Topologically, residues alanine 1292 to aspartate 1301 are cytoplasmic. Residues proline 1302 to serine 1321 form a helical membrane-spanning segment. The Extracellular segment spans residues glutamate 1322–serine 1372. Residues isoleucine 1373–glycine 1391 form a helical membrane-spanning segment. Residues glutamate 1392–proline 1409 are Cytoplasmic-facing. A helical membrane pass occupies residues tyrosine 1410–phenylalanine 1430. Residues glycine 1431–glutamine 1452 lie on the Extracellular side of the membrane. The N-linked (GlcNAc...) asparagine glycan is linked to asparagine 1436. An intramembrane region (pore-forming) is located at residues alanine 1453–leucine 1471. A Selectivity filter of repeat IV motif is present at residues threonine 1462–alanine 1465. Topologically, residues alanine 1472–phenylalanine 1499 are extracellular. The segment at lysine 1478 to lysine 1546 is dihydropyridine binding. An intrachain disulfide couples cysteine 1479 to cysteine 1495. The N-linked (GlcNAc...) asparagine glycan is linked to asparagine 1487. The interval glutamate 1492–tryptophan 1534 is phenylalkylamine binding. A helical transmembrane segment spans residues alanine 1500–methionine 1524. Over aspartate 1525–leucine 2221 the chain is Cytoplasmic. The important for interaction with STAC1, STAC2 and STAC3 stretch occupies residues aspartate 1659–glycine 1686. Residues lysine 1665–glutamine 1685 are calmodulin-binding IQ region. Positions leucine 1699–serine 1718 are important for localization in at the junctional membrane. Phosphoserine is present on residues serine 1718 and serine 1739. Positions isoleucine 1778–serine 1847 are disordered. Residues serine 1799–serine 1811 are compositionally biased toward polar residues. Residues asparagine 1812 to alanine 1822 are compositionally biased toward low complexity. Position 1981 is a phosphoserine; by PKA (serine 1981). Disordered regions lie at residues alanine 2029–serine 2063 and alanine 2186–leucine 2221.

The protein belongs to the calcium channel alpha-1 subunit (TC 1.A.1.11) family. CACNA1C subfamily. Component of a calcium channel complex consisting of a pore-forming alpha subunit (CACNA1C) and ancillary beta, gamma and delta subunits. The channel complex contains alpha, beta, gamma and delta subunits in a 1:1:1:1 ratio, i.e. it contains only one of each type of subunit. CACNA1C channel activity is modulated by ancillary subunits, such as CACNB1, CACNB2, CACNB3, CACNA2D1 and CACNA2D4. Interacts with the gamma subunits CACNG4, CACNG6, CACNG7 and CACNG8. Interacts with CACNB1. Interacts with CACNB2. Identified in a complex with CACNA2D4 and CACNB3. Interacts with CACNB3. Interacts with CACNA2D1. Interacts with CACNA2D4. Interacts with CALM1. Interacts (via the N-terminus and the C-terminal C and IQ motifs) with CABP1; this inhibits Ca(2+)-dependent channel inactivation. The binding via the C motif is calcium independent whereas the binding via IQ requires the presence of calcium and is mutually exclusive with calmodulin binding. The binding to the cytoplasmic N-terminal domain is calcium independent but is essential for the channel modulation. Interacts (via C-terminal CDB motif) with CABP5; in a calcium-dependent manner. Interacts with CIB1; the interaction increases upon cardiomyocytes hypertrophy. Interacts with STAC2 and STAC3; this inhibits channel inactivation. As to quaternary structure, (Microbial infection) Interacts with influenzavirus H1 hemagglutinin. In terms of processing, phosphorylation by PKA at Ser-1981 activates the channel. Elevated levels of blood glucose lead to increased phosphorylation by PKA. As to expression, detected throughout the brain, including hippocampus, cerebellum and amygdala, throughout the heart and vascular system, including ductus arteriosus, in urinary bladder, and in retina and sclera in the eye. Expressed in brain, heart, jejunum, ovary, pancreatic beta-cells and vascular smooth muscle. Overall expression is reduced in atherosclerotic vascular smooth muscle.

Its subcellular location is the cell membrane. The protein resides in the sarcolemma. It is found in the perikaryon. It localises to the postsynaptic density membrane. The protein localises to the cell projection. Its subcellular location is the dendrite. The protein resides in the T-tubule. It carries out the reaction Ca(2+)(in) = Ca(2+)(out). With respect to regulation, inhibited by dihydropyridines (DHP), such as isradipine. Inhibited by nifedipine. Channel activity is regulated by Ca(2+) and calmodulin. Binding of STAC1, STAC2 or STAC3 to a region that overlaps with the calmodulin binding site inhibits channel inactivation by Ca(2+) and calmodulin. Binding of calmodulin or CABP1 at the same regulatory sites results in opposite effects on the channel function. Shear stress and pressure increases calcium channel activity. Its function is as follows. Pore-forming, alpha-1C subunit of the voltage-gated calcium channel that gives rise to L-type calcium currents. Mediates influx of calcium ions into the cytoplasm, and thereby triggers calcium release from the sarcoplasm. Plays an important role in excitation-contraction coupling in the heart. Required for normal heart development and normal regulation of heart rhythm. Required for normal contraction of smooth muscle cells in blood vessels and in the intestine. Essential for normal blood pressure regulation via its role in the contraction of arterial smooth muscle cells. Long-lasting (L-type) calcium channels belong to the 'high-voltage activated' (HVA) group. Functionally, pore-forming, alpha-1C subunit of the voltage-gated calcium channel that gives rise to L-type calcium currents. In terms of biological role, (Microbial infection) Acts as a receptor for Influenzavirus. May play a critical role in allowing virus entry when sialylated and expressed on lung tissues. The polypeptide is Voltage-dependent L-type calcium channel subunit alpha-1C (CACNA1C) (Homo sapiens (Human)).